We begin with the raw amino-acid sequence, 279 residues long: CDP-paratose synthase (279 aa).

The Proton acceptor role is filled by tyrosine 115.

This sequence belongs to the NAD(P)-dependent epimerase/dehydratase family.

It carries out the reaction CDP-alpha-D-paratose + NADP(+) = CDP-4-dehydro-3,6-dideoxy-alpha-D-glucose + NADPH + H(+). The protein operates within nucleotide-sugar biosynthesis; CDP-3,6-dideoxy-D-mannose biosynthesis; CDP-3,6-dideoxy-D-mannose from CTP and alpha-D-glucose 1-phosphate: step 4/5. Functionally, catalyzes synthesis of paratose and tyvelose, unusual 3,6-dideoxyhexose sugars that form part of the O-antigen in the lipopolysaccharides of several enteric bacteria. The polypeptide is CDP-paratose synthase (rfbS) (Salmonella typhi).